A 564-amino-acid polypeptide reads, in one-letter code: 2-succinyl-5-enolpyruvyl-6-hydroxy-3-cyclohexene-1-carboxylate synthase (564 aa).

This sequence belongs to the TPP enzyme family. MenD subfamily. As to quaternary structure, homodimer. It depends on Mg(2+) as a cofactor. Mn(2+) serves as cofactor. Requires thiamine diphosphate as cofactor.

The enzyme catalyses isochorismate + 2-oxoglutarate + H(+) = 5-enolpyruvoyl-6-hydroxy-2-succinyl-cyclohex-3-ene-1-carboxylate + CO2. It participates in quinol/quinone metabolism; 1,4-dihydroxy-2-naphthoate biosynthesis; 1,4-dihydroxy-2-naphthoate from chorismate: step 2/7. Its pathway is quinol/quinone metabolism; menaquinone biosynthesis. Functionally, catalyzes the thiamine diphosphate-dependent decarboxylation of 2-oxoglutarate and the subsequent addition of the resulting succinic semialdehyde-thiamine pyrophosphate anion to isochorismate to yield 2-succinyl-5-enolpyruvyl-6-hydroxy-3-cyclohexene-1-carboxylate (SEPHCHC). This chain is 2-succinyl-5-enolpyruvyl-6-hydroxy-3-cyclohexene-1-carboxylate synthase, found in Vibrio vulnificus (strain YJ016).